The primary structure comprises 163 residues: Transcription antitermination protein NusB (163 aa).

It belongs to the NusB family.

Involved in transcription antitermination. Required for transcription of ribosomal RNA (rRNA) genes. Binds specifically to the boxA antiterminator sequence of the ribosomal RNA (rrn) operons. This chain is Transcription antitermination protein NusB, found in Granulibacter bethesdensis (strain ATCC BAA-1260 / CGDNIH1).